A 401-amino-acid polypeptide reads, in one-letter code: Elongation factor Tu (401 aa).

Residues 10-209 (KPHINVGTIG…AVDEYIPTPQ (200 aa)) form the tr-type G domain. The segment at 19–26 (GHVDHGKT) is G1. Position 19–26 (19–26 (GHVDHGKT)) interacts with GTP. A Mg(2+)-binding site is contributed by Thr26. Residues 60 to 64 (GITIA) are G2. The interval 81–84 (DCPG) is G3. Residues 81–85 (DCPGH) and 136–139 (NKVD) each bind GTP. A G4 region spans residues 136 to 139 (NKVD). A G5 region spans residues 174–176 (SAR).

This sequence belongs to the TRAFAC class translation factor GTPase superfamily. Classic translation factor GTPase family. EF-Tu/EF-1A subfamily. In terms of assembly, monomer.

It is found in the cytoplasm. The enzyme catalyses GTP + H2O = GDP + phosphate + H(+). In terms of biological role, GTP hydrolase that promotes the GTP-dependent binding of aminoacyl-tRNA to the A-site of ribosomes during protein biosynthesis. This Chloroflexus aurantiacus (strain ATCC 29366 / DSM 635 / J-10-fl) protein is Elongation factor Tu.